Consider the following 152-residue polypeptide: Prostaglandin E synthase (152 aa).

At 1-12 the chain is on the lumenal side; sequence MPAHSLVMSSPA. Residues 13-41 traverse the membrane as a helical segment; it reads LPAFLLCSTLLVIKMYVVAIITGQVRLRK. Residue Arg-38 participates in glutathione binding. The Cytoplasmic segment spans residues 42 to 60; sequence KAFANPEDALRHGGPQYCR. A helical membrane pass occupies residues 61-90; it reads SDPDVERCLRAHRNDMETIYPFLFLGFVYS. Residue 73–77 coordinates glutathione; sequence RNDME. Residues 91–95 are Lumenal-facing; the sequence is FLGPN. Residues 96–119 form a helical membrane-spanning segment; the sequence is PFVAWMHFLVFLVGRVAHTVAYLG. Residues His-113 and Tyr-117 each coordinate glutathione. Over 120 to 123 the chain is Cytoplasmic; sequence KLRA. The chain crosses the membrane as a helical span at residues 124–152; sequence PIRSVTYTLAQLPCASMALQILWEAARHL. Position 126-130 (126-130) interacts with glutathione; sequence RSVTY.

Belongs to the MAPEG family. As to quaternary structure, homotrimer. Requires glutathione as cofactor.

It localises to the membrane. Its subcellular location is the cytoplasm. It is found in the perinuclear region. It catalyses the reaction prostaglandin H2 = prostaglandin E2. The enzyme catalyses 2-glyceryl-prostaglandin H2 = 2-glyceryl-prostaglandin E2. It carries out the reaction prostaglandin G2 = (15S)-15-hydroperoxy-prostaglandin E2. The catalysed reaction is 1-chloro-2,4-dinitrobenzene + glutathione = 2,4-dinitrophenyl-S-glutathione + chloride + H(+). It catalyses the reaction (5S)-hydroperoxy-(6E,8Z,11Z,14Z)-eicosatetraenoate + 2 glutathione = (5S)-hydroxy-(6E,8Z,11Z,14Z)-eicosatetraenoate + glutathione disulfide + H2O. Its pathway is lipid metabolism; prostaglandin biosynthesis. Its activity is regulated as follows. Induced by interleukin IL1B. Terminal enzyme of the cyclooxygenase (COX)-2-mediated prostaglandin E2 (PGE2) biosynthetic pathway. Catalyzes the glutathione-dependent oxidoreduction of prostaglandin endoperoxide H2 (PGH2) to prostaglandin E2 (PGE2) in response to inflammatory stimuli. Plays a key role in inflammation response, fever and pain. Also catalyzes the oxidoreduction of endocannabinoids into prostaglandin glycerol esters and PGG2 into 15-hydroperoxy-PGE2. In addition, displays low glutathione transferase and glutathione-dependent peroxidase activities, toward 1-chloro-2,4-dinitrobenzene and 5-hydroperoxyicosatetraenoic acid (5-HPETE), respectively. The polypeptide is Prostaglandin E synthase (PTGES) (Homo sapiens (Human)).